The following is a 314-amino-acid chain: Cytochrome c biogenesis protein CcsA (314 aa).

Transmembrane regions (helical) follow at residues 15 to 35 (VSFIGILIFYFLLINLPISLI), 48 to 68 (LITILINLFIALQLISRWIIS), 73 to 93 (ISNLYESLYFLVWGITLGQLL), 102 to 122 (IIPAIAIPIELLTIAFACFVL), 148 to 168 (VMLSYAALIMGSLLSASVLFI), 216 to 236 (SILVGFVLLTLGLITGAIWAN), 250 to 267 (TWAFISWLFYAAYLHMRI), and 277 to 297 (ALLATSGFFVVLICYIGVNFL).

Belongs to the CcmF/CycK/Ccl1/NrfE/CcsA family. In terms of assembly, may interact with ccs1.

The protein resides in the cellular thylakoid membrane. In terms of biological role, required during biogenesis of c-type cytochromes (cytochrome c6 and cytochrome f) at the step of heme attachment. The chain is Cytochrome c biogenesis protein CcsA from Prochlorococcus marinus subsp. pastoris (strain CCMP1986 / NIES-2087 / MED4).